A 423-amino-acid polypeptide reads, in one-letter code: 3-phosphoshikimate 1-carboxyvinyltransferase (423 aa).

Residues lysine 21, serine 22, and arginine 26 each contribute to the 3-phosphoshikimate site. Lysine 21 is a phosphoenolpyruvate binding site. Phosphoenolpyruvate is bound by residues glycine 92 and arginine 120. 3-phosphoshikimate-binding residues include serine 164, glutamine 166, aspartate 312, and lysine 339. Glutamine 166 contributes to the phosphoenolpyruvate binding site. Aspartate 312 functions as the Proton acceptor in the catalytic mechanism. Residues arginine 343 and arginine 385 each coordinate phosphoenolpyruvate.

Belongs to the EPSP synthase family. In terms of assembly, monomer.

It is found in the cytoplasm. The catalysed reaction is 3-phosphoshikimate + phosphoenolpyruvate = 5-O-(1-carboxyvinyl)-3-phosphoshikimate + phosphate. The protein operates within metabolic intermediate biosynthesis; chorismate biosynthesis; chorismate from D-erythrose 4-phosphate and phosphoenolpyruvate: step 6/7. In terms of biological role, catalyzes the transfer of the enolpyruvyl moiety of phosphoenolpyruvate (PEP) to the 5-hydroxyl of shikimate-3-phosphate (S3P) to produce enolpyruvyl shikimate-3-phosphate and inorganic phosphate. In Thermoanaerobacter pseudethanolicus (strain ATCC 33223 / 39E) (Clostridium thermohydrosulfuricum), this protein is 3-phosphoshikimate 1-carboxyvinyltransferase.